The following is an 87-amino-acid chain: NADH dehydrogenase [ubiquinone] 1 alpha subcomplex subunit 4-like 2 (87 aa).

The protein belongs to the complex I NDUFA4 subunit family.

In Bos taurus (Bovine), this protein is NADH dehydrogenase [ubiquinone] 1 alpha subcomplex subunit 4-like 2 (NDUFA4L2).